A 119-amino-acid polypeptide reads, in one-letter code: Large ribosomal subunit protein uL18 (119 aa).

Belongs to the universal ribosomal protein uL18 family. Part of the 50S ribosomal subunit; part of the 5S rRNA/L5/L18/L25 subcomplex. Contacts the 5S and 23S rRNAs.

This is one of the proteins that bind and probably mediate the attachment of the 5S RNA into the large ribosomal subunit, where it forms part of the central protuberance. This is Large ribosomal subunit protein uL18 from Chlorobium phaeovibrioides (strain DSM 265 / 1930) (Prosthecochloris vibrioformis (strain DSM 265)).